The chain runs to 557 residues: MRDYDEVTAFLGEWGPFQRLIFFLLSASIIPNGFTGLSSVFLIATPEHRCRVPDAANLSSAWRNHTVPLRLRDGREVPHSCRRYRLATIANFSALGLEPGRDVDLGQLEQESCLDGWEFSQDVYLSTIVTEWNLVCEDDWKAPLTISLFFVGVLLGSFISGQLSDRFGRKNVLFVTMGMQTGFSFLQIFSKNFEMFVVLFVLVGMGQISNYVAAFVLGTEILGKSVRIIFSTLGVCIFYAFGYMVLPLFAYFIRDWRMLLVALTMPGVLCVALWWFIPESPRWLISQGRFEEAEVIIRKAAKANGIVVPSTIFDPSELQDLSSKKQQSHNILDLLRTWNIRMVTIMSIMLWMTISVGYFGLSLDTPNLHGDIFVNCFLSAMVEVPAYVLAWLLLQYLPRRYSMATALFLGGSVLLFMQLVPPDLYYLATVLVMVGKFGVTAAFSMVYVYTAELYPTVVRNMGVGVSSTASRLGSILSPYFVYLGAYDRFLPYILMGSLTILTAILTLFLPESFGTPLPDTIDQMLRVKGMKHRKTPSHTRMLKDGQERPTILKSTAF.

The Cytoplasmic portion of the chain corresponds to 1-20; sequence MRDYDEVTAFLGEWGPFQRL. The chain crosses the membrane as a helical span at residues 21–41; it reads IFFLLSASIIPNGFTGLSSVF. Topologically, residues 42-142 are extracellular; it reads LIATPEHRCR…NLVCEDDWKA (101 aa). Asparagine 57, asparagine 64, and asparagine 91 each carry an N-linked (GlcNAc...) asparagine glycan. A helical membrane pass occupies residues 143 to 163; the sequence is PLTISLFFVGVLLGSFISGQL. Over 164–172 the chain is Cytoplasmic; it reads SDRFGRKNV. Residues 173–193 traverse the membrane as a helical segment; sequence LFVTMGMQTGFSFLQIFSKNF. The Extracellular portion of the chain corresponds to 194 to 197; the sequence is EMFV. Residues 198 to 218 form a helical membrane-spanning segment; it reads VLFVLVGMGQISNYVAAFVLG. Residue 218–225 coordinates ATP; it reads GTEILGKS. The Cytoplasmic segment spans residues 219-232; that stretch reads TEILGKSVRIIFST. The chain crosses the membrane as a helical span at residues 233–253; it reads LGVCIFYAFGYMVLPLFAYFI. Topologically, residues 254–257 are extracellular; that stretch reads RDWR. The chain crosses the membrane as a helical span at residues 258-278; it reads MLLVALTMPGVLCVALWWFIP. Residues 279–341 lie on the Cytoplasmic side of the membrane; that stretch reads ESPRWLISQG…LDLLRTWNIR (63 aa). Residues 342 to 362 form a helical membrane-spanning segment; that stretch reads MVTIMSIMLWMTISVGYFGLS. The Extracellular segment spans residues 363–373; it reads LDTPNLHGDIF. A helical transmembrane segment spans residues 374–394; sequence VNCFLSAMVEVPAYVLAWLLL. Over 395–406 the chain is Cytoplasmic; that stretch reads QYLPRRYSMATA. A helical transmembrane segment spans residues 407 to 427; the sequence is LFLGGSVLLFMQLVPPDLYYL. Residues 428–430 lie on the Extracellular side of the membrane; that stretch reads ATV. A helical transmembrane segment spans residues 431–451; the sequence is LVMVGKFGVTAAFSMVYVYTA. Over 452–462 the chain is Cytoplasmic; the sequence is ELYPTVVRNMG. The chain crosses the membrane as a helical span at residues 463-483; it reads VGVSSTASRLGSILSPYFVYL. Over 484–488 the chain is Extracellular; sequence GAYDR. The residue at position 486 (tyrosine 486) is a Phosphotyrosine. A helical transmembrane segment spans residues 489 to 509; the sequence is FLPYILMGSLTILTAILTLFL. Positions 535–557 are disordered; that stretch reads TPSHTRMLKDGQERPTILKSTAF. Threonine 550 bears the Phosphothreonine mark.

Belongs to the major facilitator (TC 2.A.1) superfamily. Organic cation transporter (TC 2.A.1.19) family. In terms of assembly, interacts with PDZK1. Glycosylated. Glycosylation affects the expression levels. In terms of processing, not glycosylated. In terms of tissue distribution, strongly expressed in kidney, skeletal muscle, heart and placenta. Primarily expressed by surface epithelial cells of the colon (at protein level). Expressed in CD68 macrophage and CD43 T-cells but not in CD20 B-cells. In testis, localized to Sertoli cell basal membranes, peritubular myoid cells and Leydig cells.

Its subcellular location is the cell membrane. It localises to the apical cell membrane. It is found in the basal cell membrane. The protein localises to the endoplasmic reticulum. It carries out the reaction (R)-carnitine(out) + Na(+)(out) = (R)-carnitine(in) + Na(+)(in). It catalyses the reaction glycine betaine(out) + Na(+)(out) = glycine betaine(in) + Na(+)(in). The enzyme catalyses glycine betaine(out) + (R)-carnitine(in) = glycine betaine(in) + (R)-carnitine(out). The catalysed reaction is O-butanoyl-(R)-carnitine(out) + Na(+)(out) = O-butanoyl-(R)-carnitine(in) + Na(+)(in). It carries out the reaction O-acetyl-(R)-carnitine(out) + Na(+)(out) = O-acetyl-(R)-carnitine(in) + Na(+)(in). It catalyses the reaction O-propanoyl-(R)-carnitine(out) + Na(+)(out) = O-propanoyl-(R)-carnitine(in) + Na(+)(in). The enzyme catalyses (S)-carnitine(out) + Na(+)(out) = (S)-carnitine(in) + Na(+)(in). The catalysed reaction is an O-acyl-(R)-carnitine(out) + Na(+)(out) = an O-acyl-(R)-carnitine(in) + Na(+)(in). It carries out the reaction L-glutamyl-L-arginyl-glycyl-L-methionyl-L-threonine(out) + Na(+)(out) = L-glutamyl-L-arginyl-glycyl-L-methionyl-L-threonine(in) + Na(+)(in). It catalyses the reaction N,N-dimethylglycine(out) + Na(+)(out) = N,N-dimethylglycine(in) + Na(+)(in). With respect to regulation, inhibited by emetine, quinidine and verapamil. The IC(50) of emetine is 4.2 uM. Not inhibited by valproic acid. Transport of (R)-carnitine is stimulated by cholesterol in the plasma membrane. Functionally, sodium-ion dependent, high affinity carnitine transporter. Involved in the active cellular uptake of carnitine. Transports one sodium ion with one molecule of carnitine. Also transports organic cations such as tetraethylammonium (TEA) without the involvement of sodium. Relative uptake activity ratio of carnitine to TEA is 11.3. In intestinal epithelia, transports the quorum-sensing pentapeptide CSF (competence and sporulation factor) from B.subtilis which induces cytoprotective heat shock proteins contributing to intestinal homeostasis. May also contribute to regulate the transport of organic compounds in testis across the blood-testis-barrier. In terms of biological role, retained in the ER, unable to perform carnitine uptake. The sequence is that of Organic cation/carnitine transporter 2 from Homo sapiens (Human).